Consider the following 363-residue polypeptide: Anhydro-N-acetylmuramic acid kinase (363 aa).

Glycine 10 to aspartate 17 lines the ATP pocket.

Belongs to the anhydro-N-acetylmuramic acid kinase family.

The catalysed reaction is 1,6-anhydro-N-acetyl-beta-muramate + ATP + H2O = N-acetyl-D-muramate 6-phosphate + ADP + H(+). The protein operates within amino-sugar metabolism; 1,6-anhydro-N-acetylmuramate degradation. Its pathway is cell wall biogenesis; peptidoglycan recycling. Its function is as follows. Catalyzes the specific phosphorylation of 1,6-anhydro-N-acetylmuramic acid (anhMurNAc) with the simultaneous cleavage of the 1,6-anhydro ring, generating MurNAc-6-P. Is required for the utilization of anhMurNAc either imported from the medium or derived from its own cell wall murein, and thus plays a role in cell wall recycling. Contributes to intrinsic fosfomycin resistance in P.aeruginosa. This Pseudomonas aeruginosa (strain ATCC 15692 / DSM 22644 / CIP 104116 / JCM 14847 / LMG 12228 / 1C / PRS 101 / PAO1) protein is Anhydro-N-acetylmuramic acid kinase.